A 341-amino-acid polypeptide reads, in one-letter code: Glycerol-3-phosphate dehydrogenase [NAD(P)+] (341 aa).

NADPH is bound by residues Ser15, Trp16, Arg36, and Lys110. Residues Lys110, Gly139, and Ser141 each coordinate sn-glycerol 3-phosphate. Ala143 contacts NADPH. The sn-glycerol 3-phosphate site is built by Lys194, Asp247, Ser257, Arg258, and Asn259. The Proton acceptor role is filled by Lys194. Arg258 serves as a coordination point for NADPH. Residues Val282 and Glu284 each coordinate NADPH.

The protein belongs to the NAD-dependent glycerol-3-phosphate dehydrogenase family.

It is found in the cytoplasm. It catalyses the reaction sn-glycerol 3-phosphate + NAD(+) = dihydroxyacetone phosphate + NADH + H(+). It carries out the reaction sn-glycerol 3-phosphate + NADP(+) = dihydroxyacetone phosphate + NADPH + H(+). The protein operates within membrane lipid metabolism; glycerophospholipid metabolism. Its function is as follows. Catalyzes the reduction of the glycolytic intermediate dihydroxyacetone phosphate (DHAP) to sn-glycerol 3-phosphate (G3P), the key precursor for phospholipid synthesis. This Xanthomonas oryzae pv. oryzae (strain MAFF 311018) protein is Glycerol-3-phosphate dehydrogenase [NAD(P)+].